The sequence spans 270 residues: uncharacterized protein (270 aa).

The ABC transporter domain occupies 34-266 (LIARGLTKSY…PDVRRLYLGD (233 aa)). 66–73 (GPNGAGKT) provides a ligand contact to ATP.

Belongs to the ABC transporter superfamily.

This is an uncharacterized protein from Rhizobium meliloti (strain 1021) (Ensifer meliloti).